Reading from the N-terminus, the 942-residue chain is Sucrose synthase 6 (942 aa).

A GT-B glycosyltransferase region spans residues 281–759 (TVFNVVIFSV…GLKRIYECYT (479 aa)). A disordered region spans residues 830 to 862 (TTNLGAGSKQKEVTETEKTKQKSKDGQEQHDVK). Residues 838-862 (KQKEVTETEKTKQKSKDGQEQHDVK) show a composition bias toward basic and acidic residues.

Belongs to the glycosyltransferase 1 family. Plant sucrose synthase subfamily. In terms of tissue distribution, detected in the whole plant but more precisely confined to the vasculature in cotyledons, leaves, petals, anthers and roots.

The protein resides in the secreted. It localises to the cell wall. It carries out the reaction an NDP-alpha-D-glucose + D-fructose = a ribonucleoside 5'-diphosphate + sucrose + H(+). In terms of biological role, sucrose-cleaving enzyme that provides UDP-glucose and fructose for various metabolic pathways. Functions in callose synthesis at the site of phloem sieve elements. The protein is Sucrose synthase 6 (SUS6) of Arabidopsis thaliana (Mouse-ear cress).